A 172-amino-acid chain; its full sequence is Small ribosomal subunit protein uS5 (172 aa).

Positions 17–80 (LREKMIAINR…EEARRNLAKI (64 aa)) constitute an S5 DRBM domain.

Belongs to the universal ribosomal protein uS5 family. Part of the 30S ribosomal subunit. Contacts proteins S4 and S8.

In terms of biological role, with S4 and S12 plays an important role in translational accuracy. Functionally, located at the back of the 30S subunit body where it stabilizes the conformation of the head with respect to the body. The sequence is that of Small ribosomal subunit protein uS5 from Variovorax paradoxus (strain S110).